A 100-amino-acid polypeptide reads, in one-letter code: Ubiquitin-related modifier 1 (100 aa).

Gly100 carries the post-translational modification 1-thioglycine. Gly100 participates in a covalent cross-link: Glycyl lysine isopeptide (Gly-Lys) (interchain with K-? in acceptor proteins).

The protein belongs to the URM1 family. Post-translationally, C-terminal thiocarboxylation occurs in 2 steps, it is first acyl-adenylated (-COAMP) via the hesA/moeB/thiF part of UBA4, then thiocarboxylated (-COSH) via the rhodanese domain of UBA4.

It localises to the cytoplasm. Its pathway is tRNA modification; 5-methoxycarbonylmethyl-2-thiouridine-tRNA biosynthesis. Acts as a sulfur carrier required for 2-thiolation of mcm(5)S(2)U at tRNA wobble positions of cytosolic tRNA(Lys), tRNA(Glu) and tRNA(Gln). Serves as sulfur donor in tRNA 2-thiolation reaction by being thiocarboxylated (-COSH) at its C-terminus by the MOCS3 homolog UBA4. The sulfur is then transferred to tRNA to form 2-thiolation of mcm(5)S(2)U. Prior mcm(5) tRNA modification by the elongator complex is required for 2-thiolation. Also acts as a ubiquitin-like protein (UBL) that is covalently conjugated via an isopeptide bond to lysine residues of target proteins such as AHP1. The thiocarboxylated form serves as substrate for conjugation and oxidative stress specifically induces the formation of UBL-protein conjugates. The protein is Ubiquitin-related modifier 1 of Eremothecium gossypii (strain ATCC 10895 / CBS 109.51 / FGSC 9923 / NRRL Y-1056) (Yeast).